The primary structure comprises 347 residues: Isopentenyl-diphosphate delta-isomerase (347 aa).

A substrate-binding site is contributed by 9–10 (RK). Residues Ser-67, 68–70 (SMT), Ser-98, and Asn-127 contribute to the FMN site. 98 to 100 (SQR) lines the substrate pocket. Gln-162 lines the substrate pocket. Glu-163 lines the Mg(2+) pocket. Residues Lys-194, Thr-224, 274 to 276 (GIK), and 295 to 296 (AA) each bind FMN.

Belongs to the IPP isomerase type 2 family. Homooctamer. Dimer of tetramers. It depends on FMN as a cofactor. Requires NADPH as cofactor. The cofactor is Mg(2+).

Its subcellular location is the cytoplasm. It carries out the reaction isopentenyl diphosphate = dimethylallyl diphosphate. Functionally, involved in the biosynthesis of isoprenoids. Catalyzes the 1,3-allylic rearrangement of the homoallylic substrate isopentenyl (IPP) to its allylic isomer, dimethylallyl diphosphate (DMAPP). This chain is Isopentenyl-diphosphate delta-isomerase, found in Pseudescherichia vulneris (Escherichia vulneris).